The following is a 201-amino-acid chain: Female-specific protein transformer (201 aa).

The disordered stretch occupies residues 1–117 (MDADSSSRSP…RSRSRSRTPR (117 aa)). A compositionally biased stretch (basic and acidic residues) spans 9 to 37 (SPRDTRTCARPKEKVPYFADEGRERDRVR). 2 stretches are compositionally biased toward basic residues: residues 38-62 (NLRH…RARS) and 99-115 (KQRR…RSRT).

The protein localises to the nucleus speckle. Member of the regulatory pathway controlling female somatic sexual differentiation, regulated by Sxl. Activates dsx female-specific splicing by promoting the formation of a splicing enhancer complex which consists of tra, tra2 and sr proteins. In Drosophila hydei (Fruit fly), this protein is Female-specific protein transformer (tra).